Here is a 235-residue protein sequence, read N- to C-terminus: Ribitol-5-phosphate cytidylyltransferase (235 aa).

CTP-binding positions include 7–10 (LAGG), 82–88 (GADRNTS), and Ser113.

The protein belongs to the IspD/TarI cytidylyltransferase family. TarI subfamily.

It catalyses the reaction D-ribitol 5-phosphate + CTP + H(+) = CDP-L-ribitol + diphosphate. It functions in the pathway cell wall biogenesis; poly(ribitol phosphate) teichoic acid biosynthesis. Functionally, catalyzes the transfer of the cytidylyl group of CTP to D-ribitol 5-phosphate. This chain is Ribitol-5-phosphate cytidylyltransferase, found in Streptococcus pneumoniae serotype 2 (strain D39 / NCTC 7466).